The primary structure comprises 122 residues: Neutral phospholipase A2 agkistrodotoxin (122 aa).

7 cysteine pairs are disulfide-bonded: Cys-26/Cys-115, Cys-28/Cys-44, Cys-43/Cys-95, Cys-49/Cys-122, Cys-50/Cys-88, Cys-57/Cys-81, and Cys-75/Cys-86. Residues Tyr-27, Gly-29, and Gly-31 each coordinate Ca(2+). His-47 is an active-site residue. Residue Asp-48 coordinates Ca(2+). Asp-89 is a catalytic residue.

Ca(2+) is required as a cofactor. In terms of tissue distribution, expressed by the venom gland.

It localises to the secreted. It carries out the reaction a 1,2-diacyl-sn-glycero-3-phosphocholine + H2O = a 1-acyl-sn-glycero-3-phosphocholine + a fatty acid + H(+). Functionally, snake venom phospholipase A2 (PLA2) that inhibits neuromuscular transmission by blocking acetylcholine release from the nerve termini. PLA2 catalyzes the calcium-dependent hydrolysis of the 2-acyl groups in 3-sn-phosphoglycerides. This chain is Neutral phospholipase A2 agkistrodotoxin, found in Gloydius halys (Chinese water mocassin).